The chain runs to 178 residues: ATP synthase subunit b, chloroplastic (178 aa).

A helical transmembrane segment spans residues 26–46 (TNLINIIILLIILFYFLKGLL).

It belongs to the ATPase B chain family. F-type ATPases have 2 components, F(1) - the catalytic core - and F(0) - the membrane proton channel. F(1) has five subunits: alpha(3), beta(3), gamma(1), delta(1), epsilon(1). F(0) has four main subunits: a(1), b(1), b'(1) and c(10-14). The alpha and beta chains form an alternating ring which encloses part of the gamma chain. F(1) is attached to F(0) by a central stalk formed by the gamma and epsilon chains, while a peripheral stalk is formed by the delta, b and b' chains.

The protein localises to the plastid. Its subcellular location is the chloroplast thylakoid membrane. In terms of biological role, f(1)F(0) ATP synthase produces ATP from ADP in the presence of a proton or sodium gradient. F-type ATPases consist of two structural domains, F(1) containing the extramembraneous catalytic core and F(0) containing the membrane proton channel, linked together by a central stalk and a peripheral stalk. During catalysis, ATP synthesis in the catalytic domain of F(1) is coupled via a rotary mechanism of the central stalk subunits to proton translocation. Functionally, component of the F(0) channel, it forms part of the peripheral stalk, linking F(1) to F(0). This is ATP synthase subunit b, chloroplastic from Vaucheria litorea (Yellow-green alga).